The chain runs to 144 residues: Large ribosomal subunit protein uL15 (144 aa).

The tract at residues 1–52 (MRLNTLSPANGARHSRKRLGRGIGSGFGKTSGRGHKGQKSRSGSSIRRGFEG) is disordered. Over residues 21 to 31 (RGIGSGFGKTS) the composition is skewed to gly residues.

It belongs to the universal ribosomal protein uL15 family. Part of the 50S ribosomal subunit.

In terms of biological role, binds to the 23S rRNA. The polypeptide is Large ribosomal subunit protein uL15 (Buchnera aphidicola subsp. Acyrthosiphon pisum (strain 5A)).